The following is a 280-amino-acid chain: UDP-3-O-acyl-N-acetylglucosamine deacetylase (280 aa).

H77, H238, and D242 together coordinate Zn(2+). Residue H265 is the Proton donor of the active site.

It belongs to the LpxC family. It depends on Zn(2+) as a cofactor.

It catalyses the reaction a UDP-3-O-[(3R)-3-hydroxyacyl]-N-acetyl-alpha-D-glucosamine + H2O = a UDP-3-O-[(3R)-3-hydroxyacyl]-alpha-D-glucosamine + acetate. The protein operates within glycolipid biosynthesis; lipid IV(A) biosynthesis; lipid IV(A) from (3R)-3-hydroxytetradecanoyl-[acyl-carrier-protein] and UDP-N-acetyl-alpha-D-glucosamine: step 2/6. Catalyzes the hydrolysis of UDP-3-O-myristoyl-N-acetylglucosamine to form UDP-3-O-myristoylglucosamine and acetate, the committed step in lipid A biosynthesis. In Trichormus variabilis (strain ATCC 29413 / PCC 7937) (Anabaena variabilis), this protein is UDP-3-O-acyl-N-acetylglucosamine deacetylase.